The primary structure comprises 223 residues: ATP phosphoribosyltransferase (223 aa).

Belongs to the ATP phosphoribosyltransferase family. Short subfamily. As to quaternary structure, heteromultimer composed of HisG and HisZ subunits.

The protein localises to the cytoplasm. It catalyses the reaction 1-(5-phospho-beta-D-ribosyl)-ATP + diphosphate = 5-phospho-alpha-D-ribose 1-diphosphate + ATP. It participates in amino-acid biosynthesis; L-histidine biosynthesis; L-histidine from 5-phospho-alpha-D-ribose 1-diphosphate: step 1/9. In terms of biological role, catalyzes the condensation of ATP and 5-phosphoribose 1-diphosphate to form N'-(5'-phosphoribosyl)-ATP (PR-ATP). Has a crucial role in the pathway because the rate of histidine biosynthesis seems to be controlled primarily by regulation of HisG enzymatic activity. This Bordetella bronchiseptica (strain ATCC BAA-588 / NCTC 13252 / RB50) (Alcaligenes bronchisepticus) protein is ATP phosphoribosyltransferase.